We begin with the raw amino-acid sequence, 372 residues long: MRSIIADSKRLVVKVGSSLVTNDGKGLDHAAIGRWAAQIAALRAQGKEVVLVSSGAIAEGMQRLGWSKRPREIDELQAAAAVGQMGLAQVYESRFTEHGIRTAQILLTHADLADRERYLNARSTLLTLLRLGVVPIINENDTVVTDEIKFGDNDTLGALVANLIEGDALIILTDQSGLFTADPRKDPNATLVGEANAGAPELEAMAGGAGSSLGRGGMLTKILAAKRAAHSGANTVIASGREADVLVRLAAGEAIGTQLIARTARMAARKQWMADHLQVRGHVVIDAGAVEKLTAGGKSLLPIGVIDVQGAFARGEVIACVGPDGREVARGLTNYSSAETKLIHRKPSGEIETVLGYMLEPELIHRDNLVLV.

Lysine 14 provides a ligand contact to ATP. Positions 54, 141, and 153 each coordinate substrate. 173-174 (TD) is a binding site for ATP. A PUA domain is found at 280–358 (RGHVVIDAGA…GEIETVLGYM (79 aa)).

The protein belongs to the glutamate 5-kinase family.

The protein resides in the cytoplasm. The catalysed reaction is L-glutamate + ATP = L-glutamyl 5-phosphate + ADP. Its pathway is amino-acid biosynthesis; L-proline biosynthesis; L-glutamate 5-semialdehyde from L-glutamate: step 1/2. In terms of biological role, catalyzes the transfer of a phosphate group to glutamate to form L-glutamate 5-phosphate. The chain is Glutamate 5-kinase from Burkholderia orbicola (strain AU 1054).